A 61-amino-acid polypeptide reads, in one-letter code: Small ribosomal subunit protein uS14 (61 aa).

The Zn(2+) site is built by cysteine 24, cysteine 27, cysteine 40, and cysteine 43.

The protein belongs to the universal ribosomal protein uS14 family. Zinc-binding uS14 subfamily. In terms of assembly, part of the 30S ribosomal subunit. Contacts proteins S3 and S10. Zn(2+) serves as cofactor.

Functionally, binds 16S rRNA, required for the assembly of 30S particles and may also be responsible for determining the conformation of the 16S rRNA at the A site. The protein is Small ribosomal subunit protein uS14 of Helicobacter pylori (strain J99 / ATCC 700824) (Campylobacter pylori J99).